Here is a 663-residue protein sequence, read N- to C-terminus: UvrABC system protein B (663 aa).

The span at 1–10 (MIDKRDDKPF) shows a compositional bias: basic and acidic residues. The tract at residues 1 to 23 (MIDKRDDKPFKLKSKYKPSGDQP) is disordered. The Helicase ATP-binding domain maps to 31-418 (DNIEGGEKAQ…TNTIIEQIIR (388 aa)). An ATP-binding site is contributed by 44–51 (GATGTGKT). Positions 97 to 120 (YYDYYQPEAYVPSSDTYIEKDSSV) match the Beta-hairpin motif. Residues 435 to 597 (QMDDLLGEIN…IVPQTIKKDI (163 aa)) enclose the Helicase C-terminal domain. The 36-residue stretch at 627–662 (KEAINALQKQMQEAAELLDFELAAQMRDLILELKLM) folds into the UVR domain.

Belongs to the UvrB family. As to quaternary structure, forms a heterotetramer with UvrA during the search for lesions. Interacts with UvrC in an incision complex.

Its subcellular location is the cytoplasm. The UvrABC repair system catalyzes the recognition and processing of DNA lesions. A damage recognition complex composed of 2 UvrA and 2 UvrB subunits scans DNA for abnormalities. Upon binding of the UvrA(2)B(2) complex to a putative damaged site, the DNA wraps around one UvrB monomer. DNA wrap is dependent on ATP binding by UvrB and probably causes local melting of the DNA helix, facilitating insertion of UvrB beta-hairpin between the DNA strands. Then UvrB probes one DNA strand for the presence of a lesion. If a lesion is found the UvrA subunits dissociate and the UvrB-DNA preincision complex is formed. This complex is subsequently bound by UvrC and the second UvrB is released. If no lesion is found, the DNA wraps around the other UvrB subunit that will check the other stand for damage. This Streptococcus pyogenes serotype M18 (strain MGAS8232) protein is UvrABC system protein B.